A 298-amino-acid polypeptide reads, in one-letter code: Isochorismatase domain-containing protein 1 (298 aa).

Tyr160 carries the phosphotyrosine modification. Position 279 is an N6-succinyllysine (Lys279).

The protein belongs to the isochorismatase family.

The protein is Isochorismatase domain-containing protein 1 (ISOC1) of Bos taurus (Bovine).